Consider the following 71-residue polypeptide: Sec-independent protein translocase protein TatA (71 aa).

A helical transmembrane segment spans residues M1–G21. Positions K40–K71 are disordered. The span at K61–K71 shows a compositional bias: basic and acidic residues.

It belongs to the TatA/E family. In terms of assembly, the Tat system comprises two distinct complexes: a TatABC complex, containing multiple copies of TatA, TatB and TatC subunits, and a separate TatA complex, containing only TatA subunits. Substrates initially bind to the TatABC complex, which probably triggers association of the separate TatA complex to form the active translocon.

It is found in the cell inner membrane. In terms of biological role, part of the twin-arginine translocation (Tat) system that transports large folded proteins containing a characteristic twin-arginine motif in their signal peptide across membranes. TatA could form the protein-conducting channel of the Tat system. The sequence is that of Sec-independent protein translocase protein TatA from Allorhizobium ampelinum (strain ATCC BAA-846 / DSM 112012 / S4) (Agrobacterium vitis (strain S4)).